The primary structure comprises 113 residues: Flagellar transcriptional regulator FlhD (113 aa).

It belongs to the FlhD family. As to quaternary structure, homodimer; disulfide-linked. Forms a heterohexamer composed of two FlhC and four FlhD subunits. Each FlhC binds a FlhD dimer, forming a heterotrimer, and a hexamer assembles by dimerization of two heterotrimers.

The protein resides in the cytoplasm. Its function is as follows. Functions in complex with FlhC as a master transcriptional regulator that regulates transcription of several flagellar and non-flagellar operons by binding to their promoter region. Activates expression of class 2 flagellar genes, including fliA, which is a flagellum-specific sigma factor that turns on the class 3 genes. Also regulates genes whose products function in a variety of physiological pathways. This Salmonella typhi protein is Flagellar transcriptional regulator FlhD.